The following is a 329-amino-acid chain: Deoxynucleotidyltransferase terminal-interacting protein 1 (329 aa).

The tract at residues 1 to 27 (MGATGDVEQPRGPGGAERGGPELGDAG) is disordered. Positions 12-22 (GPGGAERGGPE) are enriched in gly residues. The segment at 56 to 147 (MTTSFTDPAI…RLTHELPGIK (92 aa)) is important for dimerization. A DNA-binding region (a.T hook) is located at residues 159-173 (RGSPIPKKRKGRPPG). Serine 161 carries the post-translational modification Phosphoserine. The Nuclear localization signal motif lies at 164–170 (PKKRKGR). The important for DNA and nucleosome binding stretch occupies residues 197–316 (REGPKWDPAR…MRKYMETLRT (120 aa)). The segment at residues 216–237 (GSRANKALGMGGTRGRIYIKHP) is a DNA-binding region (H-T-H motif).

As to quaternary structure, monomer and homodimer. A minor proportion may form homotrimers. Interacts with ZNF541. Interacts with the terminal deoxynucleotidyltransferase DNTT. Interacts with TRERF1. Identified in a histone deacetylase complex that contains DNTTIP1, HDAC1 and MIDEAS; this complex assembles into a tetramer that contains four copies of each protein chain. Component of a histone deacetylase complex containing DNTTIP1, ZNF541, HDAC1 and HDAC2. Identified in a complex with KCTD19, HDAC1, HDAC2 and ZNF541.

The protein localises to the nucleus. Increases DNTT terminal deoxynucleotidyltransferase activity (in vitro). Also acts as a transcriptional regulator, binding to the consensus sequence 5'-GNTGCATG-3' following an AT-tract. Associates with RAB20 promoter and positively regulates its transcription. Binds DNA and nucleosomes; may recruit HDAC1 complexes to nucleosomes or naked DNA. This Bos taurus (Bovine) protein is Deoxynucleotidyltransferase terminal-interacting protein 1 (DNTTIP1).